A 148-amino-acid chain; its full sequence is Gag-Pol polyprotein (148 aa).

The region spanning 1–64 (IPYNPQSQGV…SAGERIIDII (64 aa)) is the Integrase catalytic domain. Glutamate 12 contributes to the Mg(2+) binding site. The segment at residues 83-130 (FRVYYRDSRDPIWKGPAKLLWKGEGAVVIQDNSDIKVVPRRKVKIIRD) is a DNA-binding region (integrase-type).

In terms of assembly, homotetramer; may further associate as a homohexadecamer. Part of the pre-integration complex (PIC) which is composed of viral genome, matrix protein, Vpr and integrase. Interacts with human SMARCB1/INI1 and human PSIP1/LEDGF isoform 1. Interacts with human KPNA3; this interaction might play a role in nuclear import of the pre-integration complex. Interacts with human NUP153; this interaction might play a role in nuclear import of the pre-integration complex. Specific enzymatic cleavages by the viral protease yield mature proteins.

In terms of biological role, catalyzes viral DNA integration into the host chromosome, by performing a series of DNA cutting and joining reactions. This enzyme activity takes place after virion entry into a cell and reverse transcription of the RNA genome in dsDNA. The first step in the integration process is 3' processing. This step requires a complex comprising the viral genome, matrix protein, Vpr and integrase. This complex is called the pre-integration complex (PIC). The integrase protein removes 2 nucleotides from each 3' end of the viral DNA, leaving recessed CA OH's at the 3' ends. In the second step, the PIC enters cell nucleus. This process is mediated through integrase and Vpr proteins, and allows the virus to infect a non dividing cell. This ability to enter the nucleus is specific of lentiviruses, other retroviruses cannot and rely on cell division to access cell chromosomes. In the third step, termed strand transfer, the integrase protein joins the previously processed 3' ends to the 5' ends of strands of target cellular DNA at the site of integration. The 5'-ends are produced by integrase-catalyzed staggered cuts, 5 bp apart. A Y-shaped, gapped, recombination intermediate results, with the 5'-ends of the viral DNA strands and the 3' ends of target DNA strands remaining unjoined, flanking a gap of 5 bp. The last step is viral DNA integration into host chromosome. This involves host DNA repair synthesis in which the 5 bp gaps between the unjoined strands are filled in and then ligated. Since this process occurs at both cuts flanking the HIV genome, a 5 bp duplication of host DNA is produced at the ends of HIV-1 integration. Alternatively, Integrase may catalyze the excision of viral DNA just after strand transfer, this is termed disintegration. The chain is Gag-Pol polyprotein (gag-pol) from Homo sapiens (Human).